Reading from the N-terminus, the 641-residue chain is MPRKLYSPKHSSNPYIKDFDEYKELYKQSIEDPSKFFKNLANENISWMEDFKTTFNNQFNNAKWFEGGKTNISLNCIDRHLENDPNKIALIWEGDDPADSKELTYKELHDEVCKFANVLKDLGVQKGSRVCIYMPMIIETAFAMLACTRIGAVHSVVFGGFSPESLKDRILDADCKIVITADEGLRGGKKVPLKSNVDEALLGCPDVKNTLVIKRTGGEINWDDKKDVWYEDLVKDVSNKCAPEPMDSEDPLFILYTSGSTGKPKGVLHTTAGYLLGAHISFKYLFGIRPEDKYWCTADVGWITGHTYILYGPLSNGATTLMFEGVPTYPSASRCWEICDKHDISIFYTAPTAIRALMAQGDDPVKKTKRDSLRILGTVGEPINPEAWDWYYSVVGKSNCEVIDTWWQTETGSVLISPIAGITPTKPGSATLPFFGVKPSLYDEHGNTLEGSNAGNLVIEQSWPSQIRSIYGDHQRMIDTYFGMYKDIYFTGDGARRDEDGYFWITGRVDDVLNVSGHRLGTAEIESALVLHPKIAEAAVVGFDHPIKGQGIYAFVTLMINESFDDNFSYELKQFVAKEIGAIAKPDLIQNAPGLPKTRSGKIMRRILRKIAENDLSNLGDTTTLADPSVVESLIENKQSL.

CoA is bound by residues 186 to 189 (RGGK) and threonine 304. Residues 380-382 (GEP), 404-409 (DTWWQT), aspartate 493, and arginine 508 contribute to the ATP site. CoA is bound at residue serine 516. Arginine 519 is an ATP binding site. Positions 530, 532, and 535 each coordinate Mg(2+). Position 602 is an N6-acetyllysine (lysine 602).

This sequence belongs to the ATP-dependent AMP-binding enzyme family. The cofactor is Mg(2+). Acetylated. Deacetylation by the SIR2-homolog deacetylase activates the enzyme.

It carries out the reaction acetate + ATP + CoA = acetyl-CoA + AMP + diphosphate. Catalyzes the conversion of acetate into acetyl-CoA (AcCoA), an essential intermediate at the junction of anabolic and catabolic pathways. AcsA undergoes a two-step reaction. In the first half reaction, AcsA combines acetate with ATP to form acetyl-adenylate (AcAMP) intermediate. In the second half reaction, it can then transfer the acetyl group from AcAMP to the sulfhydryl group of CoA, forming the product AcCoA. This chain is Acetyl-coenzyme A synthetase, found in Gamma-proteobacterium EBAC31A08.